The sequence spans 453 residues: 3-phosphoshikimate 1-carboxyvinyltransferase (453 aa).

3-phosphoshikimate-binding residues include Lys28, Ser29, and Arg33. Lys28 serves as a coordination point for phosphoenolpyruvate. Residues Gly101 and Arg129 each coordinate phosphoenolpyruvate. Residues Ser174, Gln176, Asp326, and Lys353 each coordinate 3-phosphoshikimate. Gln176 contributes to the phosphoenolpyruvate binding site. Asp326 functions as the Proton acceptor in the catalytic mechanism. Residues Arg357 and Arg405 each coordinate phosphoenolpyruvate.

This sequence belongs to the EPSP synthase family. Monomer.

The protein localises to the cytoplasm. It catalyses the reaction 3-phosphoshikimate + phosphoenolpyruvate = 5-O-(1-carboxyvinyl)-3-phosphoshikimate + phosphate. The protein operates within metabolic intermediate biosynthesis; chorismate biosynthesis; chorismate from D-erythrose 4-phosphate and phosphoenolpyruvate: step 6/7. Catalyzes the transfer of the enolpyruvyl moiety of phosphoenolpyruvate (PEP) to the 5-hydroxyl of shikimate-3-phosphate (S3P) to produce enolpyruvyl shikimate-3-phosphate and inorganic phosphate. This Zymomonas mobilis subsp. mobilis (strain ATCC 31821 / ZM4 / CP4) protein is 3-phosphoshikimate 1-carboxyvinyltransferase.